Here is a 232-residue protein sequence, read N- to C-terminus: Flagellar L-ring protein (232 aa).

Positions 1–21 (MQKNAAHTYAISSLLVLSLTG) are cleaved as a signal peptide. Residue cysteine 22 is the site of N-palmitoyl cysteine attachment. A lipid anchor (S-diacylglycerol cysteine) is attached at cysteine 22.

This sequence belongs to the FlgH family. As to quaternary structure, the basal body constitutes a major portion of the flagellar organelle and consists of four rings (L,P,S, and M) mounted on a central rod.

The protein localises to the cell outer membrane. It localises to the bacterial flagellum basal body. Functionally, assembles around the rod to form the L-ring and probably protects the motor/basal body from shearing forces during rotation. This chain is Flagellar L-ring protein, found in Shigella boydii serotype 18 (strain CDC 3083-94 / BS512).